The primary structure comprises 616 residues: MDRAVSQVALENDEREAKNTWRLVFRIAILLLTVVTLAISAAALAYSMEASTPSDLIGIPTAISRAEEKITSALGSNQDVVDRIYKQVALESPLALLNTESTIMNAITSLSYQINGAANSSGCGAPIHDPDYIGGIGKELIVDDASDVTSFYPSAFQEHLNFIPAPTTGSGCTRIPSFDMSATHYCYTHNVILSGCRDHSHSHQYLALGVLRTSATGRVFFSTLHSINLDDTQNRKSCSVSATPLGCDMLCSKVTETEEEDYNSAVPTSMVHGRLGFDGQYHEKDLDVTTLFEDWVANYPGVGGGSFIDNRVWFPVYGGLKPNSPSDTAQEGKYVIYKRYNDTCPDEQDYQIRMAKSSYKPGRFGGKRVQQAILSIKVSTSLGEDPVLTVPPNTVTLMGAEGRVLTVGTSHFLYQRGSSYFSPALLYPMTVSNKTATLHSPYTFDAFTRPGSVPCQASARCPNSCVTGVYTDPYPLVFYRNHTLRGVFGTMLDDKQARLNPVSAVFDSISRSRITRVSSSSTKAAYTTSTCFKVVKTNKTYCLSIAEISNTLFGEFRIVPLLVEILKDDGVREARAGRLSQLREGWKDDIVSPIFCDAKNQTEYRRELESYAASWP.

Over methionine 1 to arginine 26 the chain is Intravirion. The chain crosses the membrane as a helical span at residues isoleucine 27 to serine 47. Residues methionine 48–proline 616 lie on the Virion surface side of the membrane. Asparagine 119 carries an N-linked (GlcNAc...) asparagine; by host glycan. The segment at glycine 124 to tyrosine 152 is important for interaction with fusion/F protein. 3 cysteine pairs are disulfide-bonded: cysteine 172–cysteine 196, cysteine 186–cysteine 247, and cysteine 238–cysteine 251. The involved in neuraminidase activity stretch occupies residues asparagine 234 to serine 239. N-linked (GlcNAc...) asparagine; by host glycans are attached at residues asparagine 341 and asparagine 433. Intrachain disulfides connect cysteine 344–cysteine 461 and cysteine 455–cysteine 465. 3 N-linked (GlcNAc...) asparagine; by host glycosylation sites follow: asparagine 481, asparagine 538, and asparagine 600. A disulfide bond links cysteine 531 and cysteine 542.

It belongs to the paramyxoviruses hemagglutinin-neuraminidase family. As to quaternary structure, homotetramer; composed of disulfide-linked homodimers. Interacts with F protein trimer. Interacts with host CG-1B; this interaction inhibits viral adsorption and replication rather than internalization.

The protein localises to the virion membrane. The protein resides in the host cell membrane. The enzyme catalyses Hydrolysis of alpha-(2-&gt;3)-, alpha-(2-&gt;6)-, alpha-(2-&gt;8)- glycosidic linkages of terminal sialic acid residues in oligosaccharides, glycoproteins, glycolipids, colominic acid and synthetic substrates.. Its function is as follows. Mediates the viral entry into the host cell together with fusion/F protein. Attaches the virus to sialic acid-containing cell receptors and thereby initiates infection. Binding of HN protein to the receptor induces a conformational change that allows the F protein to trigger virion/cell membranes fusion. Functionally, neuraminidase activity ensures the efficient spread of the virus by dissociating the mature virions from the neuraminic acid containing glycoproteins. The polypeptide is Hemagglutinin-neuraminidase (HN) (Newcastle disease virus (strain Chicken/Northern Ireland/Ulster/67) (NDV)).